A 1258-amino-acid polypeptide reads, in one-letter code: Serine/threonine-protein kinase Nek1 (1258 aa).

The region spanning 4–258 (YVRLQKIGEG…VNSILEKGFI (255 aa)) is the Protein kinase domain. ATP-binding positions include 10 to 18 (IGEGSFGKA) and Lys-33. Catalysis depends on Asp-128, which acts as the Proton acceptor. Phosphothreonine is present on Thr-156. Thr-162 is modified (phosphothreonine; by autocatalysis). The disordered stretch occupies residues 330–360 (HEKKPLQKHKQAHQTPEKRVNTGEERRKISE). The span at 344-360 (TPEKRVNTGEERRKISE) shows a compositional bias: basic and acidic residues. Ser-414, Ser-418, Ser-428, and Ser-438 each carry phosphoserine. Disordered regions lie at residues 578 to 600 (KLRG…EADM), 648 to 669 (KSSD…SKQQ), and 685 to 704 (VDSS…KTNN). Residues 579-591 (LRGEKKEANHSEG) are compositionally biased toward basic and acidic residues. Ser-653 is modified (phosphoserine). Thr-661 bears the Phosphothreonine mark. Ser-664 is subject to Phosphoserine. Basic and acidic residues predominate over residues 691 to 700 (DTRETSEEMQ). A phosphoserine mark is found at Ser-798, Ser-834, Ser-868, Ser-881, Ser-1052, and Ser-1126. The disordered stretch occupies residues 1118-1171 (REQPGEEYSEEEESVLKNSDVEPTANGTDVADEDDNPSSESALNEEWHSDNSDG).

The protein belongs to the protein kinase superfamily. NEK Ser/Thr protein kinase family. NIMA subfamily. Binds to CBY2. Found in a complex with CFAP410, NEK1 and SPATA7. Interacts with CFAP410. Interacts (via Ser-1052 phosphorylated form) with 14-3-3 proteins. The cofactor is Mg(2+). As to expression, high fetal expression in the brain and kidney.

It localises to the nucleus. The protein resides in the cytoplasm. It is found in the cytoskeleton. The protein localises to the microtubule organizing center. Its subcellular location is the centrosome. The enzyme catalyses L-seryl-[protein] + ATP = O-phospho-L-seryl-[protein] + ADP + H(+). The catalysed reaction is L-threonyl-[protein] + ATP = O-phospho-L-threonyl-[protein] + ADP + H(+). Functionally, phosphorylates serines and threonines, but also appears to possess tyrosine kinase activity. Involved in DNA damage checkpoint control and for proper DNA damage repair. In response to injury that includes DNA damage, NEK1 phosphorylates VDAC1 to limit mitochondrial cell death. May be implicated in the control of meiosis. Involved in cilium assembly. This Homo sapiens (Human) protein is Serine/threonine-protein kinase Nek1 (NEK1).